Consider the following 466-residue polypeptide: Nuclear pore complex protein Nup50 (466 aa).

Positions M1 to N14 are enriched in basic and acidic residues. The segment at M1–E22 is disordered. N6-acetyllysine is present on K8. Phosphoserine is present on S52. The stretch at F76 to G77 is repeat 1. The tract at residues F76 to G302 is 5 X 2 AA repeats of F-G. K82 carries the N6-acetyllysine modification. Repeat 2 spans residues F112–G113. At K126 the chain carries N6-acetyllysine. Disordered stretches follow at residues I128–C150 and L200–K257. Positions P131–C150 are enriched in polar residues. The segment at G143–G205 is binding to CDKN1B. At S208 the chain carries Phosphoserine. The stretch at F225 to G226 is repeat 3. The span at F225–P235 shows a compositional bias: polar residues. The residue at position 234 (S234) is a Phosphoserine. Residues N241 to K257 show a composition bias toward basic and acidic residues. T246 bears the Phosphothreonine mark. Position 268 is a phosphoserine (S268). Copy 4 of the repeat occupies F271 to G272. S294 bears the Phosphoserine mark. Copy 5 of the repeat occupies F301–G302. Positions S316 to P343 are disordered. The RanBD1 domain occupies D333–A466. Residue K351 forms a Glycyl lysine isopeptide (Lys-Gly) (interchain with G-Cter in SUMO2) linkage. N6-acetyllysine is present on K448.

In terms of assembly, does not interact with TPR. Interacts with Importin alpha-2, Importin beta, Importin beta-2, NUP153, Ran binding protein 7, CDKN1B and itself. Widely expressed at low levels. Highest in the developing neural tube and adult testes.

The protein resides in the nucleus. It is found in the nuclear pore complex. It localises to the nucleus membrane. Component of the nuclear pore complex that has a direct role in nuclear protein import. Actively displaces NLSs from importin-alpha, and facilitates disassembly of the importin-alpha:beta-cargo complex and importin recycling. Interacts with regulatory proteins of cell cycle progression including CDKN1B. This interaction is required for correct intracellular transport and degradation of CDKN1B. In Mus musculus (Mouse), this protein is Nuclear pore complex protein Nup50 (Nup50).